We begin with the raw amino-acid sequence, 273 residues long: Cell division protein FtsQ (273 aa).

The Cytoplasmic segment spans residues 1–10 (MWNDARTINL). Residues 11-31 (IANTLAVLAVAAMLLAGVAWV) form a helical membrane-spanning segment. Over 32–273 (AQRPYFTLAA…HSKSKPAKKR (242 aa)) the chain is Periplasmic. In terms of domain architecture, POTRA spans 37-110 (FTLAAIEIES…NTLRVRVEEQ (74 aa)).

Belongs to the FtsQ/DivIB family. FtsQ subfamily. As to quaternary structure, part of a complex composed of FtsB, FtsL and FtsQ.

The protein resides in the cell inner membrane. Its function is as follows. Essential cell division protein. May link together the upstream cell division proteins, which are predominantly cytoplasmic, with the downstream cell division proteins, which are predominantly periplasmic. May control correct divisome assembly. The protein is Cell division protein FtsQ of Bordetella pertussis (strain Tohama I / ATCC BAA-589 / NCTC 13251).